Reading from the N-terminus, the 444-residue chain is 1,4-beta-D-glucan glucohydrolase (444 aa).

The active-site Proton donor is glutamate 164. Glutamate 349 acts as the Nucleophile in catalysis.

It belongs to the glycosyl hydrolase 1 family. Monomer.

It carries out the reaction Hydrolysis of (1-&gt;4)-linkages in (1-&gt;4)-beta-D-glucans, to remove successive glucose units.. It catalyses the reaction Hydrolysis of terminal, non-reducing beta-D-glucosyl residues with release of beta-D-glucose.. It functions in the pathway glycan metabolism; cellulose degradation. It participates in glycan metabolism; beta-D-glucan degradation. Activated by glucose up to 200 mM when p-nitrophenyl-beta-glucoside is used as the substrate. This activation by end product concentrations may be due to a transglycosylation activity of the enzyme. Its function is as follows. Broad substrate specificity glycosidase. Releases glucose from soluble glucooligomers, with a preference for longer oligomers; acts more readily on cellotetraose than on cellobiose. Displays similar activities towards the disaccharides lactose and cellobiose. Is also able to hydrolyze various aryl-beta-glycosides in vitro. The chain is 1,4-beta-D-glucan glucohydrolase from Thermotoga neapolitana (strain ATCC 49049 / DSM 4359 / NBRC 107923 / NS-E).